Reading from the N-terminus, the 510-residue chain is NADH-quinone oxidoreductase subunit N (510 aa).

14 helical membrane-spanning segments follow: residues 14–34 (LLPEFIILGFATFLSLLDLFA), 42–62 (VIGWLSFLGTVIAAIFVIINM), 84–104 (AFKLIFLAGTAFAILISLSYL), 113–133 (GEYYYLLLTGLLGAMVMASSA), 135–155 (LITLFVGLELLSLSSYVLVGL), 170–190 (VVSGSIATAVLLFGMSYVYGL), 208–228 (MAGYQFLVYTAFAFLAVGLAF), 247–267 (PTPVTVFLAVVSKAAGFALIF), 286–306 (FFFEEGSLYLGLMAAASMIIG), 323–343 (SGIAQAGYLLVPFVPPTSLFF), 346–366 (VIFYLFGYLLVSFGAFAVIMV), 390–410 (AIAMSIFLLSLAGIPITVGFF), 426–446 (WLAAIMIITSVISYYYYFGII), and 466–486 (IWTFILIMAIATVFFGAFPGL).

This sequence belongs to the complex I subunit 2 family. As to quaternary structure, NDH-1 is composed of 14 different subunits. Subunits NuoA, H, J, K, L, M, N constitute the membrane sector of the complex.

It localises to the cell membrane. The catalysed reaction is a quinone + NADH + 5 H(+)(in) = a quinol + NAD(+) + 4 H(+)(out). Functionally, NDH-1 shuttles electrons from NADH, via FMN and iron-sulfur (Fe-S) centers, to quinones in the respiratory chain. The immediate electron acceptor for the enzyme in this species is believed to be a menaquinone. Couples the redox reaction to proton translocation (for every two electrons transferred, four hydrogen ions are translocated across the cytoplasmic membrane), and thus conserves the redox energy in a proton gradient. This Brevibacillus brevis (strain 47 / JCM 6285 / NBRC 100599) protein is NADH-quinone oxidoreductase subunit N.